The sequence spans 147 residues: Acireductone dioxygenase (147 aa).

4 residues coordinate Fe(2+): histidine 74, histidine 76, glutamate 80, and histidine 119. Ni(2+) is bound by residues histidine 74, histidine 76, glutamate 80, and histidine 119.

The protein belongs to the acireductone dioxygenase (ARD) family. Fe(2+) is required as a cofactor. Requires Ni(2+) as cofactor.

Its subcellular location is the cytoplasm. The protein resides in the nucleus. The enzyme catalyses 1,2-dihydroxy-5-(methylsulfanyl)pent-1-en-3-one + O2 = 4-methylsulfanyl-2-oxobutanoate + formate + 2 H(+). It catalyses the reaction 1,2-dihydroxy-5-(methylsulfanyl)pent-1-en-3-one + O2 = 3-(methylsulfanyl)propanoate + CO + formate + 2 H(+). It participates in amino-acid biosynthesis; L-methionine biosynthesis via salvage pathway; L-methionine from S-methyl-5-thio-alpha-D-ribose 1-phosphate: step 5/6. In terms of biological role, catalyzes 2 different reactions between oxygen and the acireductone 1,2-dihydroxy-3-keto-5-methylthiopentene (DHK-MTPene) depending upon the metal bound in the active site. Fe-containing acireductone dioxygenase (Fe-ARD) produces formate and 2-keto-4-methylthiobutyrate (KMTB), the alpha-ketoacid precursor of methionine in the methionine recycle pathway. Ni-containing acireductone dioxygenase (Ni-ARD) produces methylthiopropionate, carbon monoxide and formate, and does not lie on the methionine recycle pathway. In Dictyostelium discoideum (Social amoeba), this protein is Acireductone dioxygenase (adi1).